We begin with the raw amino-acid sequence, 221 residues long: Membrane-bound lytic murein transglycosylase E (221 aa).

This sequence belongs to the transglycosylase Slt family.

The enzyme catalyses Exolytic cleavage of the (1-&gt;4)-beta-glycosidic linkage between N-acetylmuramic acid (MurNAc) and N-acetylglucosamine (GlcNAc) residues in peptidoglycan, from either the reducing or the non-reducing ends of the peptidoglycan chains, with concomitant formation of a 1,6-anhydrobond in the MurNAc residue.. Its function is as follows. Murein-degrading enzyme. May play a role in recycling of muropeptides during cell elongation and/or cell division. The sequence is that of Membrane-bound lytic murein transglycosylase E (mltE) from Buchnera aphidicola subsp. Acyrthosiphon pisum (strain APS) (Acyrthosiphon pisum symbiotic bacterium).